A 306-amino-acid chain; its full sequence is Bifunctional protein FolD 2 (306 aa).

NADP(+)-binding positions include 169–171 (GHS) and isoleucine 235.

Belongs to the tetrahydrofolate dehydrogenase/cyclohydrolase family. Homodimer.

It catalyses the reaction (6R)-5,10-methylene-5,6,7,8-tetrahydrofolate + NADP(+) = (6R)-5,10-methenyltetrahydrofolate + NADPH. The enzyme catalyses (6R)-5,10-methenyltetrahydrofolate + H2O = (6R)-10-formyltetrahydrofolate + H(+). It functions in the pathway one-carbon metabolism; tetrahydrofolate interconversion. Its function is as follows. Catalyzes the oxidation of 5,10-methylenetetrahydrofolate to 5,10-methenyltetrahydrofolate and then the hydrolysis of 5,10-methenyltetrahydrofolate to 10-formyltetrahydrofolate. The protein is Bifunctional protein FolD 2 of Mesorhizobium japonicum (strain LMG 29417 / CECT 9101 / MAFF 303099) (Mesorhizobium loti (strain MAFF 303099)).